We begin with the raw amino-acid sequence, 937 residues long: AP-2 complex subunit beta (937 aa).

T2 carries the post-translational modification N-acetylthreonine. The residue at position 4 (S4) is a Phosphoserine. K265 is subject to N6-acetyllysine. Residues Y737 and Y928 each carry the phosphotyrosine modification.

It belongs to the adaptor complexes large subunit family. In terms of assembly, adapter protein complex 2 (AP-2) is a heterotetramer composed of two large adaptins (alpha-type subunit AP2A1 or AP2A2 and beta-type subunit AP2B1), a medium adaptin (mu-type subunit AP2M1) and a small adaptin (sigma-type subunit AP2S1). Interacts with EPN1. Interacts with EPS15; clathrin competes with EPS15. Interacts with SNAP91; clathrin competes with SNAP91. Interacts with CLTC; clathrin competes with EPS15, SNAP91 and PIP5K1C. Interacts with LDLRAP1. Interacts with AMPH and BIN1. Interacts with ARF6 (GDP-bound). Interacts (dephosphorylated at Tyr-737) with ARRB1; phosphorylation of AP2B1 at Tyr-737 disrupts the interaction. Interacts with SLC2A8. Interacts with SCYL1 and SCYL2. Interacts with TGFBR1 and TGFBR2. Interacts with PIP5K1C; clathrin competes with PIP5K1C. Interacts with DENND1B. Interacts with FCHO1. Interacts with RFTN1. Interacts with KIAA1107. Together with AP2A1 or AP2A2 and AP2M1, it interacts with ADAM10; this interaction facilitates ADAM10 endocytosis from the plasma membrane during long-term potentiation in hippocampal neurons. In terms of processing, the N-terminus is blocked. Phosphorylation at Tyr-737 by SRC occurs at the plasma membrane in clathrin-coated vesicles (CCVs).

It localises to the cell membrane. The protein localises to the membrane. The protein resides in the coated pit. In terms of biological role, component of the adaptor protein complex 2 (AP-2). Adaptor protein complexes function in protein transport via transport vesicles in different membrane traffic pathways. Adaptor protein complexes are vesicle coat components and appear to be involved in cargo selection and vesicle formation. AP-2 is involved in clathrin-dependent endocytosis in which cargo proteins are incorporated into vesicles surrounded by clathrin (clathrin-coated vesicles, CCVs) which are destined for fusion with the early endosome. The clathrin lattice serves as a mechanical scaffold but is itself unable to bind directly to membrane components. Clathrin-associated adaptor protein (AP) complexes which can bind directly to both the clathrin lattice and to the lipid and protein components of membranes are considered to be the major clathrin adaptors contributing the CCV formation. AP-2 also serves as a cargo receptor to selectively sort the membrane proteins involved in receptor-mediated endocytosis. AP-2 seems to play a role in the recycling of synaptic vesicle membranes from the presynaptic surface. AP-2 recognizes Y-X-X-[FILMV] (Y-X-X-Phi) and [ED]-X-X-X-L-[LI] endocytosis signal motifs within the cytosolic tails of transmembrane cargo molecules. AP-2 may also play a role in maintaining normal post-endocytic trafficking through the ARF6-regulated, non-clathrin pathway. During long-term potentiation in hippocampal neurons, AP-2 is responsible for the endocytosis of ADAM10. The AP-2 beta subunit acts via its C-terminal appendage domain as a scaffolding platform for endocytic accessory proteins; at least some clathrin-associated sorting proteins (CLASPs) are recognized by their [DE]-X(1,2)-F-X-X-[FL]-X-X-X-R motif. The AP-2 beta subunit binds to clathrin heavy chain, promoting clathrin lattice assembly; clathrin displaces at least some CLASPs from AP2B1 which probably then can be positioned for further coat assembly. This Bos taurus (Bovine) protein is AP-2 complex subunit beta (AP2B1).